Reading from the N-terminus, the 308-residue chain is Porphobilinogen deaminase (308 aa).

The residue at position 240 (Cys240) is an S-(dipyrrolylmethanemethyl)cysteine.

It belongs to the HMBS family. In terms of assembly, monomer. Dipyrromethane is required as a cofactor.

It catalyses the reaction 4 porphobilinogen + H2O = hydroxymethylbilane + 4 NH4(+). The protein operates within porphyrin-containing compound metabolism; protoporphyrin-IX biosynthesis; coproporphyrinogen-III from 5-aminolevulinate: step 2/4. Functionally, tetrapolymerization of the monopyrrole PBG into the hydroxymethylbilane pre-uroporphyrinogen in several discrete steps. In Desulfitobacterium hafniense (strain DSM 10664 / DCB-2), this protein is Porphobilinogen deaminase.